The sequence spans 218 residues: CTP-dependent diacylglycerol kinase 1 (218 aa).

At Met1–Lys19 the chain is on the lumenal side. Residues Ala20–Tyr37 form a helical membrane-spanning segment. His38 is a topological domain (cytoplasmic). The helical transmembrane segment at Ala39–Ile59 threads the bilayer. Over Arg60–Gly88 the chain is Lumenal. A helical membrane pass occupies residues Val89–Val109. Residues Met110–Leu142 are Cytoplasmic-facing. The chain crosses the membrane as a helical span at residues Ala143–Phe163. The Lumenal segment spans residues Arg164–Pro179. The next 2 membrane-spanning stretches (helical) occupy residues Trp180–Leu200 and Asp201–Ile217. A topological domain (lumenal) is located at residue Met218.

Belongs to the DGK1 family. Ca(2+) is required as a cofactor. Requires Mg(2+) as cofactor.

The protein localises to the endoplasmic reticulum membrane. The protein resides in the nucleus membrane. It catalyses the reaction a 1,2-diacyl-sn-glycerol + CTP = a 1,2-diacyl-sn-glycero-3-phosphate + CDP + H(+). CTP-dependent diacylglycerol kinase that catalyzes the phosphorylation of diacylglycerol (DAG) to phosphatidate (PA). Controls phosphatidate levels at the nuclear envelope. Counteracts the activity of PA phosphatase ned1. May be involved in vesicle trafficking between the endoplasmic reticulum and the Golgi apparatus. Involved in pre-tRNA splicing. The chain is CTP-dependent diacylglycerol kinase 1 (ptp4) from Schizosaccharomyces pombe (strain 972 / ATCC 24843) (Fission yeast).